The following is a 395-amino-acid chain: Phosphopentomutase (395 aa).

Positions 13, 288, 293, 329, 330, and 341 each coordinate Mn(2+).

The protein belongs to the phosphopentomutase family. Mn(2+) serves as cofactor.

It is found in the cytoplasm. It catalyses the reaction 2-deoxy-alpha-D-ribose 1-phosphate = 2-deoxy-D-ribose 5-phosphate. The catalysed reaction is alpha-D-ribose 1-phosphate = D-ribose 5-phosphate. It functions in the pathway carbohydrate degradation; 2-deoxy-D-ribose 1-phosphate degradation; D-glyceraldehyde 3-phosphate and acetaldehyde from 2-deoxy-alpha-D-ribose 1-phosphate: step 1/2. Isomerase that catalyzes the conversion of deoxy-ribose 1-phosphate (dRib-1-P) and ribose 1-phosphate (Rib-1-P) to deoxy-ribose 5-phosphate (dRib-5-P) and ribose 5-phosphate (Rib-5-P), respectively. In Agathobacter rectalis (strain ATCC 33656 / DSM 3377 / JCM 17463 / KCTC 5835 / VPI 0990) (Eubacterium rectale), this protein is Phosphopentomutase.